Reading from the N-terminus, the 259-residue chain is Protein CDI (259 aa).

Residues 236 to 259 (FADLWLNEMEEYNKENKKEADNAK) adopt a coiled-coil conformation.

Mostly expressed in pollen grains and pollen tubes, and, at low levels, in seedlings, roots, stems, leaves, flowers and siliques.

It localises to the cytoplasm. The protein localises to the cytosol. Probable nucleotide-diphospho-sugar transferase required for pollen germination and tube growth. The protein is Protein CDI of Arabidopsis thaliana (Mouse-ear cress).